The chain runs to 181 residues: ATP synthase subunit delta (181 aa).

The protein belongs to the ATPase delta chain family. F-type ATPases have 2 components, F(1) - the catalytic core - and F(0) - the membrane proton channel. F(1) has five subunits: alpha(3), beta(3), gamma(1), delta(1), epsilon(1). F(0) has three main subunits: a(1), b(2) and c(10-14). The alpha and beta chains form an alternating ring which encloses part of the gamma chain. F(1) is attached to F(0) by a central stalk formed by the gamma and epsilon chains, while a peripheral stalk is formed by the delta and b chains.

It is found in the cell membrane. Functionally, f(1)F(0) ATP synthase produces ATP from ADP in the presence of a proton or sodium gradient. F-type ATPases consist of two structural domains, F(1) containing the extramembraneous catalytic core and F(0) containing the membrane proton channel, linked together by a central stalk and a peripheral stalk. During catalysis, ATP synthesis in the catalytic domain of F(1) is coupled via a rotary mechanism of the central stalk subunits to proton translocation. In terms of biological role, this protein is part of the stalk that links CF(0) to CF(1). It either transmits conformational changes from CF(0) to CF(1) or is implicated in proton conduction. This Desulforamulus reducens (strain ATCC BAA-1160 / DSM 100696 / MI-1) (Desulfotomaculum reducens) protein is ATP synthase subunit delta.